The chain runs to 504 residues: MSNASLSWLTKLNTSETPDKVLRRSSIIGTIGPKTNNVDVLVKLRKAGLNIVRMNFSHGSYEYHQSVIDNAKQSEEIYKGRPLAIALDTKGPEIRTGTTIDDKDYPILPNHEMIFTTDEAYAKKCDDKVMFIDYKNITKVIEAGKIIYIDDGVVSFEVLQIVDDKTLKVRSVNSGKICSHKGVNLPGTDVDLPALSEKDKADIKFGVKNGVHMIFASFIRTGDDIKEIRKVLGEEGKDIQIIAKIENQQGVNNFDEILVETDGVMVARGDLGIEIPAPQVFVVQKQLIAKCNLAAKPVICATQMLESMTYNPRPTRAEVSDVGNAILDGADCVMLSGETAKGNYPFEAVSMMHNTAIIAEKAIAYQPLHNEIRSLANRPTPTTETCAMASVSAAYEQDAKAIVVLSTSGFTSRLVSKYKPNVPVMMVTRNHRAARYCHLYRGVYPFVYEKKTVDNWQEDVENRLRWAVSEAIDLGIIKKGDSIVTIQGWTRGSGHSNTVRVVQA.

Residue Arg-53 participates in substrate binding. K(+) contacts are provided by Asn-55, Ser-57, Asp-88, and Thr-89. Residue 55–58 (NFSH) coordinates ATP. Residues Arg-95 and Lys-181 each coordinate ATP. Mg(2+) is bound at residue Glu-246. The substrate site is built by Gly-269, Asp-270, and Thr-302. Residue Asp-270 coordinates Mg(2+).

The protein belongs to the pyruvate kinase family. Homotetramer. Mg(2+) serves as cofactor. The cofactor is K(+).

It carries out the reaction pyruvate + ATP = phosphoenolpyruvate + ADP + H(+). It functions in the pathway carbohydrate degradation; glycolysis; pyruvate from D-glyceraldehyde 3-phosphate: step 5/5. The sequence is that of Pyruvate kinase (PYK1) from Debaryomyces hansenii (strain ATCC 36239 / CBS 767 / BCRC 21394 / JCM 1990 / NBRC 0083 / IGC 2968) (Yeast).